A 661-amino-acid chain; its full sequence is MNNFSIISEYKPAGDQPKAIDEIIAGLSSKKRSQMLLGITGSGKTFTMANIIERTNRPTLIMAHNKTLAAQIYSEMKSLFPKNAVEYFVSYYDYYQPEAYIARTDTFIEKDSSINEQIDLMRHAATRSLLERRDVIVVSSVSCIYGLGSPDLYYQMMVNLEPGQSYPRDQLLNDLINLQYERNDIGFERGCFRVKGDNIDIFPSHYSDKAWRLSFFGNELEYIHEFDPLTGEKLAKLDKAMVFGNSHFVMPQETVNNAISGIEEELQKRLEFLKSQDKPLETQRLNQRTQYDLEMLTETGSCKGVENYSRFFTGRNAGEPPPTLFEYLPEDALLFVDESHVSVPQIRAMYNGDRARKKVLVEHGFRLPSALDNRPLKFEEWDKFRPQTVFVSATPGPFELEETGGTVVELIIRPTGLLDPECIIKPATNQVEDLISEIQTTIAQGFRVLVTTLTKKMAEDLTAYLQELKYKTSYLHSNVHTLERIEILRDLRQGTIDVLVGINLLREGLDIPECGLVAILDADKEGFLRSEVSLIQTIGRAARNSAGRVILYADKMTKSIDKAVSETLRRRQIQQEYNEKHGIIPKTINRAIHALAEFEKIDSKLDKKQAHTLFDNPAKLKTHIDKLKKEMLKAASNLEFEQAVKLRDQLKTLEEAALELS.

Residues 25–414 enclose the Helicase ATP-binding domain; the sequence is AGLSSKKRSQ…GTVVELIIRP (390 aa). 38–45 contacts ATP; it reads GITGSGKT. The Beta-hairpin signature appears at 91 to 114; it reads YYDYYQPEAYIARTDTFIEKDSSI. Positions 430 to 592 constitute a Helicase C-terminal domain; it reads QVEDLISEIQ…IIPKTINRAI (163 aa). Positions 621–656 constitute a UVR domain; it reads KTHIDKLKKEMLKAASNLEFEQAVKLRDQLKTLEEA.

It belongs to the UvrB family. As to quaternary structure, forms a heterotetramer with UvrA during the search for lesions. Interacts with UvrC in an incision complex.

It localises to the cytoplasm. In terms of biological role, the UvrABC repair system catalyzes the recognition and processing of DNA lesions. A damage recognition complex composed of 2 UvrA and 2 UvrB subunits scans DNA for abnormalities. Upon binding of the UvrA(2)B(2) complex to a putative damaged site, the DNA wraps around one UvrB monomer. DNA wrap is dependent on ATP binding by UvrB and probably causes local melting of the DNA helix, facilitating insertion of UvrB beta-hairpin between the DNA strands. Then UvrB probes one DNA strand for the presence of a lesion. If a lesion is found the UvrA subunits dissociate and the UvrB-DNA preincision complex is formed. This complex is subsequently bound by UvrC and the second UvrB is released. If no lesion is found, the DNA wraps around the other UvrB subunit that will check the other stand for damage. The protein is UvrABC system protein B of Rickettsia conorii (strain ATCC VR-613 / Malish 7).